The sequence spans 98 residues: DNA-binding protein Fis (98 aa).

A DNA-binding region (H-T-H motif) is located at residues 74–93 (QTRAATMLGINRGTLRKKLK).

It belongs to the transcriptional regulatory Fis family. Homodimer.

Functionally, activates ribosomal RNA transcription. Plays a direct role in upstream activation of rRNA promoters. This is DNA-binding protein Fis from Mannheimia haemolytica (Pasteurella haemolytica).